A 102-amino-acid polypeptide reads, in one-letter code: Small ribosomal subunit protein uS10 (102 aa).

Belongs to the universal ribosomal protein uS10 family. As to quaternary structure, part of the 30S ribosomal subunit.

Involved in the binding of tRNA to the ribosomes. This chain is Small ribosomal subunit protein uS10, found in Rhizobium meliloti (strain 1021) (Ensifer meliloti).